We begin with the raw amino-acid sequence, 375 residues long: Probable G-protein coupled receptor 34 (375 aa).

The Extracellular portion of the chain corresponds to 1–54; the sequence is MTTTSVDSWLCSSHGMHFITNYSDQASQNFSGVPNVTSCPMDEKLLSTVLTTFY. Asn-21, Asn-29, and Asn-35 each carry an N-linked (GlcNAc...) asparagine glycan. Residues 55-75 traverse the membrane as a helical segment; that stretch reads SVIFLVGLVGNIIALYVFLGI. At 76 to 81 the chain is on the cytoplasmic side; sequence HRKRNS. The helical transmembrane segment at 82–102 threads the bilayer; it reads IQIYLLNVAVADLLLIFCLPF. Residues 103 to 121 lie on the Extracellular side of the membrane; the sequence is RIMYHINQNKWTLGVILCK. The cysteines at positions 120 and 197 are disulfide-linked. The chain crosses the membrane as a helical span at residues 122 to 142; that stretch reads VVGTLFYMNMYISIILLGFIS. Topologically, residues 143-164 are cytoplasmic; sequence LDRYIKINRSIQQRRAITTKQS. Residues 165–185 form a helical membrane-spanning segment; it reads IYVCCIVWTVALAGFLTMIIL. Over 186–209 the chain is Extracellular; sequence TLKKGGHNSTMCFHYRDRHNAKGE. Asn-193 carries N-linked (GlcNAc...) asparagine glycosylation. Residues 210-230 traverse the membrane as a helical segment; it reads AIFNFVLVVMFWLIFLLIILS. Residues 231-262 are Cytoplasmic-facing; it reads YIKIGKNLLRISKRRSKFPNSGKYATTARNSF. The helical transmembrane segment at 263–283 threads the bilayer; that stretch reads IVLIIFTICFVPYHAFRFIYI. At 284 to 303 the chain is on the extracellular side; sequence SSQLNVSSCYWKEIIHKTNE. N-linked (GlcNAc...) asparagine glycosylation occurs at Asn-288. A helical membrane pass occupies residues 304-324; the sequence is IMLVFSSFNSCLDPVMYFLMS. The Cytoplasmic segment spans residues 325-375; that stretch reads SNIRKIMCQLLFRRFQSEASRSESTSEFKPGHSLHDLSVTVKMPQYSTKGN.

It belongs to the G-protein coupled receptor 1 family. As to expression, highly expressed in glial cells such as astrocytes and microglia.

It is found in the cell membrane. In terms of biological role, G-protein-coupled receptor of lysophosphatidylserine (LysoPS) that plays different roles in immune response. Acts a damage-sensing receptor that triggers tissue repair upon recognition of dying neutrophils. Mechanistically, apoptotic neutrophils release lysophosphatydilserine that are recognized by type 3 innate lymphoid cells (ILC3s) via GPR34, which activates downstream PI3K-AKT and RAS-ERK signaling pathways leading to STAT3 activation and IL-22 production. Plays an important role in microglial function, controlling morphology and phagocytosis. This chain is Probable G-protein coupled receptor 34 (Gpr34), found in Mus musculus (Mouse).